Consider the following 286-residue polypeptide: Probable protein S-acyltransferase 16 (286 aa).

2 helical membrane passes run 11-31 (PVTVVMLVIGFIYFASVFTFI) and 45-65 (NAAAFTALALMCIYNYSIAVF). The DHHC domain occupies 97 to 147 (RYCQKCSHFKPPRAHHCRVCKRCVLRMDHHCIWINNCVGHTNYKVFFVFVV). Cysteine 127 functions as the S-palmitoyl cysteine intermediate in the catalytic mechanism. The next 2 membrane-spanning stretches (helical) occupy residues 141-161 (VFFVFVVYAVTACVYSLVLLV) and 182-202 (IYVISAFLLIPLSIALGVLLG).

It belongs to the DHHC palmitoyltransferase family.

It is found in the golgi apparatus membrane. It catalyses the reaction L-cysteinyl-[protein] + hexadecanoyl-CoA = S-hexadecanoyl-L-cysteinyl-[protein] + CoA. Its function is as follows. Palmitoyl acyltransferase. The polypeptide is Probable protein S-acyltransferase 16 (PAT16) (Arabidopsis thaliana (Mouse-ear cress)).